Consider the following 153-residue polypeptide: Insulin-like growth factor 1 (153 aa).

The b stretch occupies residues 49–77 (GPETLCGAELVDALQFVCGPRGFYFNKPT). 3 disulfides stabilise this stretch: C54-C96, C66-C109, and C95-C100. The segment at 78–89 (GYGSSIRRAPQT) is c. An a region spans residues 90-110 (GIVDECCFRSCDLRRLEMYCA). A d region spans residues 111–118 (PLKPTKSA). Residues 119–153 (RSIRAQRHTDMPKTQKEVHLKNTSRGSAGNKTYRM) constitute a propeptide, e peptide. A disordered region spans residues 119-153 (RSIRAQRHTDMPKTQKEVHLKNTSRGSAGNKTYRM). The span at 125–138 (RHTDMPKTQKEVHL) shows a compositional bias: basic and acidic residues. Residues 139–153 (KNTSRGSAGNKTYRM) show a composition bias toward polar residues.

Belongs to the insulin family. Forms a ternary complex with IGFR1 and ITGAV:ITGB3. Forms a ternary complex with IGFR1 and ITGA6:ITGB4. Forms a ternary complex with IGFBP3 and ALS.

The protein localises to the secreted. Functionally, the insulin-like growth factors, isolated from plasma, are structurally and functionally related to insulin but have a much higher growth-promoting activity. May be a physiological regulator of [1-14C]-2-deoxy-D-glucose (2DG) transport and glycogen synthesis in osteoblasts. Stimulates glucose transport in bone-derived osteoblastic (PyMS) cells and is effective at much lower concentrations than insulin, not only regarding glycogen and DNA synthesis but also with regard to enhancing glucose uptake. May play a role in synapse maturation. Ca(2+)-dependent exocytosis of IGF1 is required for sensory perception of smell in the olfactory bulb. Acts as a ligand for IGF1R. Binds to the alpha subunit of IGF1R, leading to the activation of the intrinsic tyrosine kinase activity which autophosphorylates tyrosine residues in the beta subunit thus initiating a cascade of down-stream signaling events leading to activation of the PI3K-AKT/PKB and the Ras-MAPK pathways. Binds to integrins ITGAV:ITGB3 and ITGA6:ITGB4. Its binding to integrins and subsequent ternary complex formation with integrins and IGFR1 are essential for IGF1 signaling. Induces the phosphorylation and activation of IGFR1, MAPK3/ERK1, MAPK1/ERK2 and AKT1. As part of the MAPK/ERK signaling pathway, acts as a negative regulator of apoptosis in cardiomyocytes via promotion of STUB1/CHIP-mediated ubiquitination and degradation of ICER-type isoforms of CREM. This chain is Insulin-like growth factor 1, found in Rattus norvegicus (Rat).